Consider the following 62-residue polypeptide: Photosystem II reaction center protein Z (62 aa).

Transmembrane regions (helical) follow at residues 8-28 (AVFALIAISFLLVIGVPVVLA) and 41-61 (FSGASLWIGLVFLVGILNSFI).

The protein belongs to the PsbZ family. PSII is composed of 1 copy each of membrane proteins PsbA, PsbB, PsbC, PsbD, PsbE, PsbF, PsbH, PsbI, PsbJ, PsbK, PsbL, PsbM, PsbT, PsbY, PsbZ, Psb30/Ycf12, at least 3 peripheral proteins of the oxygen-evolving complex and a large number of cofactors. It forms dimeric complexes.

It is found in the plastid. Its subcellular location is the chloroplast thylakoid membrane. Functionally, may control the interaction of photosystem II (PSII) cores with the light-harvesting antenna, regulates electron flow through the 2 photosystem reaction centers. PSII is a light-driven water plastoquinone oxidoreductase, using light energy to abstract electrons from H(2)O, generating a proton gradient subsequently used for ATP formation. The sequence is that of Photosystem II reaction center protein Z from Marchantia polymorpha (Common liverwort).